We begin with the raw amino-acid sequence, 315 residues long: tRNA dimethylallyltransferase (315 aa).

ATP is bound at residue 13–20 (GPTASGKT). 15–20 (TASGKT) lines the substrate pocket. Interaction with substrate tRNA stretches follow at residues 38-41 (DSAL), 162-166 (QRLSR), 243-248 (RCVGYR), and 276-283 (KRQITWLR).

Belongs to the IPP transferase family. As to quaternary structure, monomer. Requires Mg(2+) as cofactor.

The catalysed reaction is adenosine(37) in tRNA + dimethylallyl diphosphate = N(6)-dimethylallyladenosine(37) in tRNA + diphosphate. Catalyzes the transfer of a dimethylallyl group onto the adenine at position 37 in tRNAs that read codons beginning with uridine, leading to the formation of N6-(dimethylallyl)adenosine (i(6)A). The chain is tRNA dimethylallyltransferase from Vibrio vulnificus (strain YJ016).